Consider the following 159-residue polypeptide: U1 small nuclear ribonucleoprotein C (159 aa).

Residues 4–36 (FYCDYCDTYLTHDSPSVRKTHCSGRKHKENVKD) form a Matrin-type zinc finger. Disordered stretches follow at residues 63-95 (PPTPFAAPPAGSAMIPPPPSLGGPPRPGMMPAP) and 139-159 (MRPPTRPMMLQSRPGMARPDR). The segment covering 77–95 (IPPPPSLGGPPRPGMMPAP) has biased composition (pro residues).

This sequence belongs to the U1 small nuclear ribonucleoprotein C family. In terms of assembly, component of the U1 snRNP. The U1 snRNP is composed of the U1 snRNA and the 7 core Sm proteins snrpb, snrpd1, snrpd2, snrpd3, snrpe, snrpf and snrpg that assemble in a heptameric protein ring on the Sm site of the small nuclear RNA to form the core snRNP, and at least 3 U1 snRNP-specific proteins snrnp70/U1-70K, snrpa/U1-A and snrpc/U1-C. snrpc/U1-C interacts with U1 snRNA and the 5' splice-site region of the pre-mRNA.

The protein localises to the nucleus. Component of the spliceosomal U1 snRNP, which is essential for recognition of the pre-mRNA 5' splice-site and the subsequent assembly of the spliceosome. SNRPC/U1-C is directly involved in initial 5' splice-site recognition for both constitutive and regulated alternative splicing. The interaction with the 5' splice-site seems to precede base-pairing between the pre-mRNA and the U1 snRNA. Stimulates commitment or early (E) complex formation by stabilizing the base pairing of the 5' end of the U1 snRNA and the 5' splice-site region. In Xenopus laevis (African clawed frog), this protein is U1 small nuclear ribonucleoprotein C.